A 399-amino-acid polypeptide reads, in one-letter code: Elongation factor Tu 2 (399 aa).

In terms of domain architecture, tr-type G spans 10–209; the sequence is KPHVNIGTIG…QVDGYIPEPE (200 aa). Positions 19-26 are G1; the sequence is GHVDHGKT. GTP is bound at residue 19-26; that stretch reads GHVDHGKT. Thr26 provides a ligand contact to Mg(2+). The G2 stretch occupies residues 60 to 64; that stretch reads GITIA. The segment at 81–84 is G3; it reads DCPG. GTP-binding positions include 81-85 and 136-139; these read DCPGH and NKAD. Residues 136–139 are G4; that stretch reads NKAD. Residues 174–176 form a G5 region; the sequence is SAL.

The protein belongs to the TRAFAC class translation factor GTPase superfamily. Classic translation factor GTPase family. EF-Tu/EF-1A subfamily. As to quaternary structure, monomer.

It is found in the cytoplasm. The enzyme catalyses GTP + H2O = GDP + phosphate + H(+). In terms of biological role, GTP hydrolase that promotes the GTP-dependent binding of aminoacyl-tRNA to the A-site of ribosomes during protein biosynthesis. The chain is Elongation factor Tu 2 from Syntrophotalea carbinolica (strain DSM 2380 / NBRC 103641 / GraBd1) (Pelobacter carbinolicus).